We begin with the raw amino-acid sequence, 312 residues long: Acetyl-coenzyme A carboxylase carboxyl transferase subunit alpha (312 aa).

Residues 36–286 (RLDKEVKSIY…KEYFLDALRT (251 aa)) enclose the CoA carboxyltransferase C-terminal domain.

The protein belongs to the AccA family. Acetyl-CoA carboxylase is a heterohexamer composed of biotin carboxyl carrier protein (AccB), biotin carboxylase (AccC) and two subunits each of ACCase subunit alpha (AccA) and ACCase subunit beta (AccD).

The protein resides in the cytoplasm. The enzyme catalyses N(6)-carboxybiotinyl-L-lysyl-[protein] + acetyl-CoA = N(6)-biotinyl-L-lysyl-[protein] + malonyl-CoA. It participates in lipid metabolism; malonyl-CoA biosynthesis; malonyl-CoA from acetyl-CoA: step 1/1. In terms of biological role, component of the acetyl coenzyme A carboxylase (ACC) complex. First, biotin carboxylase catalyzes the carboxylation of biotin on its carrier protein (BCCP) and then the CO(2) group is transferred by the carboxyltransferase to acetyl-CoA to form malonyl-CoA. The protein is Acetyl-coenzyme A carboxylase carboxyl transferase subunit alpha of Helicobacter pylori (strain HPAG1).